The sequence spans 135 residues: Small ribosomal subunit protein uS12 (135 aa).

The residue at position 89 (aspartate 89) is a 3-methylthioaspartic acid. Residues 103 to 135 (DTAGVKNRMQSRSKYGTKRPKPGQAAAPAGKKR) are disordered. A compositionally biased stretch (basic residues) spans 111–123 (MQSRSKYGTKRPK). A compositionally biased stretch (low complexity) spans 124–135 (PGQAAAPAGKKR).

It belongs to the universal ribosomal protein uS12 family. Part of the 30S ribosomal subunit. Contacts proteins S8 and S17. May interact with IF1 in the 30S initiation complex.

Its function is as follows. With S4 and S5 plays an important role in translational accuracy. Interacts with and stabilizes bases of the 16S rRNA that are involved in tRNA selection in the A site and with the mRNA backbone. Located at the interface of the 30S and 50S subunits, it traverses the body of the 30S subunit contacting proteins on the other side and probably holding the rRNA structure together. The combined cluster of proteins S8, S12 and S17 appears to hold together the shoulder and platform of the 30S subunit. The sequence is that of Small ribosomal subunit protein uS12 from Gloeobacter violaceus (strain ATCC 29082 / PCC 7421).